A 398-amino-acid chain; its full sequence is O-methyltransferase penC (398 aa).

Aspartate 263 is an S-adenosyl-L-methionine binding site. The Proton acceptor role is filled by histidine 305.

It belongs to the class I-like SAM-binding methyltransferase superfamily. Cation-independent O-methyltransferase family.

It functions in the pathway secondary metabolite biosynthesis. The protein operates within alkaloid biosynthesis. Its pathway is mycotoxin biosynthesis. In terms of biological role, O-methyltransferase; part of the gene cluster that mediates the biosynthesis of penigequinolones, potent insecticidal alkaloids that contain a highly modified 10-carbon prenyl group. The first stage is catalyzed by the nonribosomal peptide synthetase penN that condenses anthranilic acid and O-methyl-L-tyrosine to produce 4'-methoxycyclopeptin. 4'-methoxycyclopeptin is then converted to 4'-methoxydehydrocyclopeptin by the ketoglutarate-dependent dioxygenase penM through dehydrogenation to form a double bond between C-alpha and C-beta of the O-methyltyrosine side chain. PenM also converts its first product methoxydehydrocyclopeptin to 4'-methoxycyclopenin. The following conversion of 4'methoxycyclopenin into 4'-methoxyviridicatin is catalyzed by the cyclopenase penL. 4'-methoxyviridicatin is the precursor of quinolone natural products, and is further converted to quinolinone B. The prenyltransferase penI then catalyzes the canonical Friedel-Crafts alkylation of quinolinone B with dimethylallyl cation to yield dimethylallyl quinolone, which is subjected to FAD-dependent dehydrogenation by the FAD-linked oxidoreductase penH to yield conjugated aryl diene. The delta(3') double bond then serves as the site of the second alkylation with DMAPP catalyzed by the prenyltransferase penG to yield a carbenium ion intermediate, which can be attacked by H(2)O to yield a styrenyl quinolone containing a C3'-hydroxyprenyl chain, or undergo cyclization to yield yaequinolones J1 and J2. The conversion of the styrenyl quinolone into the tetrahydrofuran-containing yaequinolone C is performed by the FAD-dependent monooxygenase penE and involves epoxidation of the terminal C7'-C8' olefin, followed by epoxide ring opening initiated by the C3' hydroxyl group. The predicted cysteine hydrolase penJ acts as an epoxide hydrolase that enhances the rate of the 5-exo-tet cyclization step, increasing the yield of yaequinolone C. PenF catalyzes the cationic rearrangement of the epoxide formed by penE (before ring opening to produce yaequinolone C) into yaequinolone D. Finally, the short-chain dehydrogenase/reductase (SDR)-like reductase penD, catalyzes both the dehydration of yaequinolone D and the reduction of the resulting oxonium to yield penigequinolone. The sequence is that of O-methyltransferase penC from Penicillium thymicola.